A 73-amino-acid chain; its full sequence is DNA-directed RNA polymerase subunit omega (73 aa).

The protein belongs to the RNA polymerase subunit omega family. The RNAP catalytic core consists of 2 alpha, 1 beta, 1 beta' and 1 omega subunit. When a sigma factor is associated with the core the holoenzyme is formed, which can initiate transcription.

The enzyme catalyses RNA(n) + a ribonucleoside 5'-triphosphate = RNA(n+1) + diphosphate. Promotes RNA polymerase assembly. Latches the N- and C-terminal regions of the beta' subunit thereby facilitating its interaction with the beta and alpha subunits. The protein is DNA-directed RNA polymerase subunit omega of Clostridium novyi (strain NT).